The primary structure comprises 100 residues: Urease subunit gamma (100 aa).

This sequence belongs to the urease gamma subunit family. As to quaternary structure, heterotrimer of UreA (gamma), UreB (beta) and UreC (alpha) subunits. Three heterotrimers associate to form the active enzyme.

The protein localises to the cytoplasm. It carries out the reaction urea + 2 H2O + H(+) = hydrogencarbonate + 2 NH4(+). It participates in nitrogen metabolism; urea degradation; CO(2) and NH(3) from urea (urease route): step 1/1. The polypeptide is Urease subunit gamma (Synechococcus sp. (strain CC9902)).